A 1034-amino-acid chain; its full sequence is Phosphoenolpyruvate carboxylase (1034 aa).

Catalysis depends on residues His-203 and Lys-680.

It belongs to the PEPCase type 1 family. The cofactor is Mg(2+).

It catalyses the reaction oxaloacetate + phosphate = phosphoenolpyruvate + hydrogencarbonate. Forms oxaloacetate, a four-carbon dicarboxylic acid source for the tricarboxylic acid cycle. This chain is Phosphoenolpyruvate carboxylase (ppc), found in Synechocystis sp. (strain ATCC 27184 / PCC 6803 / Kazusa).